The primary structure comprises 283 residues: Bifunctional protein FolD (283 aa).

NADP(+) is bound by residues 165–167, Thr-192, and Val-233; that span reads GRG.

It belongs to the tetrahydrofolate dehydrogenase/cyclohydrolase family. As to quaternary structure, homodimer.

The enzyme catalyses (6R)-5,10-methylene-5,6,7,8-tetrahydrofolate + NADP(+) = (6R)-5,10-methenyltetrahydrofolate + NADPH. The catalysed reaction is (6R)-5,10-methenyltetrahydrofolate + H2O = (6R)-10-formyltetrahydrofolate + H(+). It functions in the pathway one-carbon metabolism; tetrahydrofolate interconversion. Catalyzes the oxidation of 5,10-methylenetetrahydrofolate to 5,10-methenyltetrahydrofolate and then the hydrolysis of 5,10-methenyltetrahydrofolate to 10-formyltetrahydrofolate. This Mycolicibacterium smegmatis (strain ATCC 700084 / mc(2)155) (Mycobacterium smegmatis) protein is Bifunctional protein FolD.